We begin with the raw amino-acid sequence, 137 residues long: Large ribosomal subunit protein bL21 (137 aa).

The segment at 1–26 (MADTKTATPATDAEEATATPPAAAPS) is disordered.

The protein belongs to the bacterial ribosomal protein bL21 family. As to quaternary structure, part of the 50S ribosomal subunit. Contacts protein L20.

Its function is as follows. This protein binds to 23S rRNA in the presence of protein L20. This chain is Large ribosomal subunit protein bL21, found in Parasynechococcus marenigrum (strain WH8102).